A 556-amino-acid polypeptide reads, in one-letter code: MSTQVSASSLAQIPQPKNRPVANFHPNIWGDQFITYTPEDKVTRACKEEQIEDLKKEVKRKLTAAAVANPSQLLNFIDAVQRLGVAYHFEQEIEEALQHICNSFHDCNDMDGDLYNIALGFRLLRQQGYTISCDIFNKFTDERGRFKEALISDVRGMLGLYEAAHLRVHGEDILAKALAFTTTHLKAMVESLGYHLAEQVAHALNRPIRKGLERLEARWYISVYQDEAFHDKTLLELAKLDFNLVQSLHKEELSNLARWWKELDFATKLPFARDRLVEGYFWMHGVYFEPQYLRGRRILTKVIAMTSILDDIHDAYGTPEELKLFIEAIERWDINSINQLPEYMKLCYVALLDVYKEIEEEMEKEGNQYRVHYAKEVMKNQVRAYFAEAKWLHEEHVPAFEEYMRVALASSGYCLLATTSFVGMGEIATKEAFDWVTSDPKIMSSSNFITRLMDDIKSHKFEQKRGHVTSAVECYMKQYGVSEEQVYSEFQKQIENAWLDINQECLKPTAVSMPLLARLLNFTRTMDVIYKEQDSYTHVGKVMRDNIASVFINAVI.

The span at 1–12 (MSTQVSASSLAQ) shows a compositional bias: polar residues. The disordered stretch occupies residues 1–24 (MSTQVSASSLAQIPQPKNRPVANF). Mg(2+)-binding residues include D310, D314, and E462. The short motif at 310–314 (DDIHD) is the DDXXD motif element.

This sequence belongs to the terpene synthase family. Tpsa subfamily. Mg(2+) serves as cofactor. As to expression, expressed in flowers and anthers. Detected inside the pollen grains, but not in stems, leaves, tendrils, roots, seeds, pistils or caps.

The protein localises to the cytoplasm. It carries out the reaction (2E,6E)-farnesyl diphosphate = (+)-valencene + diphosphate. It catalyses the reaction (2E,6E)-farnesyl diphosphate = (-)-7-epi-alpha-selinene + diphosphate. It functions in the pathway secondary metabolite biosynthesis; terpenoid biosynthesis. Its function is as follows. Involved in the biosynthesis of valencene, a major volatile emitted from flowers of grapevine. Can use farnesyl diphosphate as substrate, but not geranyl diphosphate or geranylgeranyl diphosphate. Produces mainly (+)-valencene and (-)-7-epi-alpha-selinene along with five minor products. The polypeptide is Valencene synthase (ValCS) (Vitis vinifera (Grape)).